The sequence spans 578 residues: MKDTIRQLIQQALTRLVTEGVLPEGLTPAIQVENARDKTHGDFASNIAMMLAKPAGMKPRDLAEKLIAALPSDEQVSKVEIAGPGFLNFFQNTAALAARLDAALADAHLSVRKAGAVQRVVVDLSAPNLAKEMHVGHLRSTIIGDGVANVLTFLGDTVIRQNHVGDWGTQFGMLLAYLQEKPATSDELSDLENFYRAAKQRFDESEEFAERARGLVVKLQAGDAECLALWTRFKDISLSHCQETYERLNVKLTPADVMGESAYNDDLANVVNDLKATGLLVESNGAQCVFLEEFRTADDTPLPVIVQKAGGGYLYATTDLAAIRYRSKVLKADRVLYFVDQRQALHFQQVFEVARRAGFVHDGMQLEHMGFGTMNGADGRPFKTRDGGTVKLIDLLDEAEERAYTLVKEKNPEVAEAELRSIAKAVGISAVKYADLSKHRASDYSFNFDQMLSFEGNTAPYLLYAYTRVAGVFRKLGTPFDASKGQIVLAAPQEQELAARLAQFTETLNNVAEKGTPHVLCAYLYDLAGLFSSFYENCPILGAENPDQQQSRLRLAALTGRTLKQGLDLLGLETLERM.

Residues 127 to 137 (PNLAKEMHVGH) carry the 'HIGH' region motif.

This sequence belongs to the class-I aminoacyl-tRNA synthetase family. Monomer.

It is found in the cytoplasm. It carries out the reaction tRNA(Arg) + L-arginine + ATP = L-arginyl-tRNA(Arg) + AMP + diphosphate. The protein is Arginine--tRNA ligase of Pseudomonas savastanoi pv. phaseolicola (strain 1448A / Race 6) (Pseudomonas syringae pv. phaseolicola (strain 1448A / Race 6)).